Consider the following 343-residue polypeptide: Probable transposase for insertion sequence element (343 aa).

Belongs to the transposase mutator family.

In terms of biological role, required for the transposition of the insertion element. This is Probable transposase for insertion sequence element from Corynebacterium diphtheriae.